Here is a 428-residue protein sequence, read N- to C-terminus: ATP-dependent RNA helicase RhlB (428 aa).

The Q motif signature appears at 9-37 (QKFSDFALHPLVLEALEKKGFQHCTPIQA). The 180-residue stretch at 40–219 (LPLTLSGRDV…FEQMNNAEYV (180 aa)) folds into the Helicase ATP-binding domain. An ATP-binding site is contributed by 53-60 (AQTGTGKT). Residues 165 to 168 (DEAD) carry the DEAD box motif. A Helicase C-terminal domain is found at 245–390 (RLLQTLIEEE…VSKYNSDALL (146 aa)). The segment at 392–428 (DLPAPKRLARPRGGNGPRRNSAPRRGGAPRNNRKRSG) is disordered. Low complexity predominate over residues 408–421 (PRRNSAPRRGGAPR).

It belongs to the DEAD box helicase family. RhlB subfamily. Component of the RNA degradosome, which is a multiprotein complex involved in RNA processing and mRNA degradation.

The protein resides in the cytoplasm. The catalysed reaction is ATP + H2O = ADP + phosphate + H(+). Functionally, DEAD-box RNA helicase involved in RNA degradation. Has RNA-dependent ATPase activity and unwinds double-stranded RNA. The chain is ATP-dependent RNA helicase RhlB from Serratia proteamaculans (strain 568).